Reading from the N-terminus, the 435-residue chain is Methylenetetrahydrofolate--tRNA-(uracil-5-)-methyltransferase TrmFO (435 aa).

9-14 contacts FAD; sequence GAGLAG.

The protein belongs to the MnmG family. TrmFO subfamily. Requires FAD as cofactor.

Its subcellular location is the cytoplasm. It carries out the reaction uridine(54) in tRNA + (6R)-5,10-methylene-5,6,7,8-tetrahydrofolate + NADH + H(+) = 5-methyluridine(54) in tRNA + (6S)-5,6,7,8-tetrahydrofolate + NAD(+). The catalysed reaction is uridine(54) in tRNA + (6R)-5,10-methylene-5,6,7,8-tetrahydrofolate + NADPH + H(+) = 5-methyluridine(54) in tRNA + (6S)-5,6,7,8-tetrahydrofolate + NADP(+). In terms of biological role, catalyzes the folate-dependent formation of 5-methyl-uridine at position 54 (M-5-U54) in all tRNAs. This is Methylenetetrahydrofolate--tRNA-(uracil-5-)-methyltransferase TrmFO from Staphylococcus aureus (strain JH1).